The primary structure comprises 209 residues: Uracil phosphoribosyltransferase (209 aa).

Residues Arg-79, Arg-104, and Asp-131–Ser-139 each bind 5-phospho-alpha-D-ribose 1-diphosphate. Uracil contacts are provided by residues Ile-194 and Gly-199–Ala-201. A 5-phospho-alpha-D-ribose 1-diphosphate-binding site is contributed by Asp-200.

This sequence belongs to the UPRTase family. Requires Mg(2+) as cofactor.

It catalyses the reaction UMP + diphosphate = 5-phospho-alpha-D-ribose 1-diphosphate + uracil. It participates in pyrimidine metabolism; UMP biosynthesis via salvage pathway; UMP from uracil: step 1/1. Allosterically activated by GTP. In terms of biological role, catalyzes the conversion of uracil and 5-phospho-alpha-D-ribose 1-diphosphate (PRPP) to UMP and diphosphate. The chain is Uracil phosphoribosyltransferase from Streptococcus suis (strain 05ZYH33).